The chain runs to 674 residues: ATP-citrate synthase subunit 1 (674 aa).

A compositionally biased stretch (low complexity) spans 1–10 (MPSATSTNGA). Residues 1-26 (MPSATSTNGANGNGNGNGASASPAPG) are disordered. Residues 261-281 (LLRYQADPACKILVLLGEVGG) and 312-338 (FKTEVQFGHAGAFANSQLETAATKNKS) each bind ATP. Glu278 lines the Mg(2+) pocket. Catalysis depends on His320, which acts as the Tele-phosphohistidine intermediate. A CoA-binding site is contributed by 339 to 349 (MREAGFYVPDT).

Belongs to the succinate/malate CoA ligase alpha subunit family. In terms of assembly, composed of two subunits.

It is found in the cytoplasm. The enzyme catalyses oxaloacetate + acetyl-CoA + ADP + phosphate = citrate + ATP + CoA. Catalyzes the formation of cytosolic acetyl-CoA, which is mainly used for the biosynthesis of fatty acids and sterols. This chain is ATP-citrate synthase subunit 1 (ACL1), found in Sordaria macrospora (strain ATCC MYA-333 / DSM 997 / K(L3346) / K-hell).